The primary structure comprises 400 residues: Elongation factor Tu (400 aa).

The region spanning 10 to 209 (KPHINIGTIG…AVDDYIPTPE (200 aa)) is the tr-type G domain. Residues 19–26 (GHVDHGKT) form a G1 region. 19 to 26 (GHVDHGKT) contacts GTP. Mg(2+) is bound at residue Thr26. Residues 60 to 64 (GITIS) form a G2 region. Residues 81-84 (DCPG) are G3. Residues 81–85 (DCPGH) and 136–139 (NKVD) contribute to the GTP site. The interval 136–139 (NKVD) is G4. Residues 174–176 (SAK) are G5.

This sequence belongs to the TRAFAC class translation factor GTPase superfamily. Classic translation factor GTPase family. EF-Tu/EF-1A subfamily. As to quaternary structure, monomer.

The protein resides in the cytoplasm. It carries out the reaction GTP + H2O = GDP + phosphate + H(+). In terms of biological role, GTP hydrolase that promotes the GTP-dependent binding of aminoacyl-tRNA to the A-site of ribosomes during protein biosynthesis. In Herpetosiphon aurantiacus (Herpetosiphon giganteus), this protein is Elongation factor Tu.